The following is a 377-amino-acid chain: Glycine oxidase (377 aa).

FAD contacts are provided by residues 14–15 (VI), 34–35 (EK), 42–43 (AS), 47–49 (AGM), and valine 180. The substrate site is built by arginine 309 and arginine 336. FAD is bound at residue 334–340 (HYRNGIL).

It belongs to the DAO family. ThiO subfamily. As to quaternary structure, homotetramer. It depends on FAD as a cofactor.

The enzyme catalyses glycine + O2 + H2O = glyoxylate + H2O2 + NH4(+). It catalyses the reaction N-ethylglycine + O2 + H2O = ethylamine + glyoxylate + H2O2. The catalysed reaction is sarcosine + O2 + H2O = methylamine + glyoxylate + H2O2. It carries out the reaction D-alanine + O2 + H2O = pyruvate + H2O2 + NH4(+). It participates in cofactor biosynthesis; thiamine diphosphate biosynthesis. Its activity is regulated as follows. Is inhibited at high substrate concentration. Its function is as follows. Catalyzes the FAD-dependent oxidative deamination of various amines and D-amino acids to yield the corresponding alpha-keto acids, ammonia/amine, and hydrogen peroxide. Oxidizes glycine, sarcosine (N-methylglycine), N-ethylglycine, D-proline, D-alanine, glycine-ethyl ester, and some other D-amino acids. Does not act on L-proline. Is essential for thiamine biosynthesis since the oxidation of glycine catalyzed by ThiO generates the glycine imine intermediate (dehydroglycine) required for the biosynthesis of the thiazole ring of thiamine pyrophosphate. This is Glycine oxidase from Geobacillus kaustophilus (strain HTA426).